The chain runs to 141 residues: Hemoglobin subunit alpha-1/2 (141 aa).

One can recognise a Globin domain in the interval 1–141 (VLSPADKTNV…VSTVLTSKYR (141 aa)). A Phosphoserine modification is found at Ser3. At Lys7 the chain carries N6-succinyllysine. Phosphothreonine is present on Thr8. Lys11 bears the N6-succinyllysine mark. Lys16 carries the N6-acetyllysine; alternate modification. An N6-succinyllysine; alternate modification is found at Lys16. Phosphotyrosine is present on Tyr24. Residue Ser35 is modified to Phosphoserine. Lys40 is modified (N6-succinyllysine). The residue at position 49 (Ser49) is a Phosphoserine. An O2-binding site is contributed by His58. His87 provides a ligand contact to heme b. Ser102 carries the post-translational modification Phosphoserine. Position 108 is a phosphothreonine (Thr108). The residue at position 124 (Ser124) is a Phosphoserine. Residues Thr134 and Thr137 each carry the phosphothreonine modification. At Ser138 the chain carries Phosphoserine.

This sequence belongs to the globin family. Heterotetramer of two alpha chains and two beta chains. In terms of tissue distribution, red blood cells.

In terms of biological role, involved in oxygen transport from the lung to the various peripheral tissues. The protein is Hemoglobin subunit alpha-1/2 of Mustela lutreola (European mink).